Here is a 359-residue protein sequence, read N- to C-terminus: 3-dehydroquinate synthase (359 aa).

Residues 71–76 (DGEQYK), 104–108 (GVVGD), 128–129 (TT), Lys-141, Lys-150, and 168–171 (TLNT) contribute to the NAD(+) site. Positions 183, 247, and 264 each coordinate Zn(2+).

The protein belongs to the sugar phosphate cyclases superfamily. Dehydroquinate synthase family. Co(2+) is required as a cofactor. Zn(2+) serves as cofactor. It depends on NAD(+) as a cofactor.

Its subcellular location is the cytoplasm. The enzyme catalyses 7-phospho-2-dehydro-3-deoxy-D-arabino-heptonate = 3-dehydroquinate + phosphate. Its pathway is metabolic intermediate biosynthesis; chorismate biosynthesis; chorismate from D-erythrose 4-phosphate and phosphoenolpyruvate: step 2/7. Catalyzes the conversion of 3-deoxy-D-arabino-heptulosonate 7-phosphate (DAHP) to dehydroquinate (DHQ). The sequence is that of 3-dehydroquinate synthase from Coxiella burnetii (strain Dugway 5J108-111).